Here is a 107-residue protein sequence, read N- to C-terminus: Nucleoid-associated protein mlr5504 (107 aa).

Belongs to the YbaB/EbfC family. In terms of assembly, homodimer.

Its subcellular location is the cytoplasm. It localises to the nucleoid. Functionally, binds to DNA and alters its conformation. May be involved in regulation of gene expression, nucleoid organization and DNA protection. The polypeptide is Nucleoid-associated protein mlr5504 (Mesorhizobium japonicum (strain LMG 29417 / CECT 9101 / MAFF 303099) (Mesorhizobium loti (strain MAFF 303099))).